The primary structure comprises 394 residues: Keratin, type I cuticular Ha4 (394 aa).

A head region spans residues M1–E56. The region spanning E56–L367 is the IF rod domain. Residues K57 to R91 form a coil 1A region. Residues S92–S102 are linker 1. The interval Y103 to S203 is coil 1B. A linker 12 region spans residues Q204 to V219. The coil 2 stretch occupies residues D220 to E363. The interval D364 to N394 is tail.

This sequence belongs to the intermediate filament family. As to expression, expressed in the hair follicles.

In Homo sapiens (Human), this protein is Keratin, type I cuticular Ha4 (KRT34).